The sequence spans 448 residues: Exodeoxyribonuclease 7 large subunit (448 aa).

This sequence belongs to the XseA family. As to quaternary structure, heterooligomer composed of large and small subunits.

The protein resides in the cytoplasm. The enzyme catalyses Exonucleolytic cleavage in either 5'- to 3'- or 3'- to 5'-direction to yield nucleoside 5'-phosphates.. Bidirectionally degrades single-stranded DNA into large acid-insoluble oligonucleotides, which are then degraded further into small acid-soluble oligonucleotides. This is Exodeoxyribonuclease 7 large subunit from Alcanivorax borkumensis (strain ATCC 700651 / DSM 11573 / NCIMB 13689 / SK2).